We begin with the raw amino-acid sequence, 95 residues long: Aspartyl/glutamyl-tRNA(Asn/Gln) amidotransferase subunit C (95 aa).

It belongs to the GatC family. As to quaternary structure, heterotrimer of A, B and C subunits.

The catalysed reaction is L-glutamyl-tRNA(Gln) + L-glutamine + ATP + H2O = L-glutaminyl-tRNA(Gln) + L-glutamate + ADP + phosphate + H(+). The enzyme catalyses L-aspartyl-tRNA(Asn) + L-glutamine + ATP + H2O = L-asparaginyl-tRNA(Asn) + L-glutamate + ADP + phosphate + 2 H(+). Its function is as follows. Allows the formation of correctly charged Asn-tRNA(Asn) or Gln-tRNA(Gln) through the transamidation of misacylated Asp-tRNA(Asn) or Glu-tRNA(Gln) in organisms which lack either or both of asparaginyl-tRNA or glutaminyl-tRNA synthetases. The reaction takes place in the presence of glutamine and ATP through an activated phospho-Asp-tRNA(Asn) or phospho-Glu-tRNA(Gln). The polypeptide is Aspartyl/glutamyl-tRNA(Asn/Gln) amidotransferase subunit C (Halothermothrix orenii (strain H 168 / OCM 544 / DSM 9562)).